Reading from the N-terminus, the 450-residue chain is Bifunctional protein GlmU (450 aa).

The tract at residues 1-228 is pyrophosphorylase; the sequence is MSTALVILAA…EAQTLGVNSR (228 aa). UDP-N-acetyl-alpha-D-glucosamine-binding positions include 8-11, Lys-22, Gln-75, 80-81, 103-105, Gly-140, Glu-154, Asn-169, and Asn-226; these read LAAG, GT, and YGD. Residue Asp-105 coordinates Mg(2+). Mg(2+) is bound at residue Asn-226. Residues 229 to 249 are linker; the sequence is ADLAAADAIFQTRARAELLDL. The N-acetyltransferase stretch occupies residues 250–450; the sequence is GVTLMAPETV…AKKASKQKET (201 aa). UDP-N-acetyl-alpha-D-glucosamine-binding residues include Arg-315 and Lys-333. Residue His-345 is the Proton acceptor of the active site. UDP-N-acetyl-alpha-D-glucosamine-binding residues include Tyr-348 and Asn-359. Acetyl-CoA contacts are provided by residues Ala-362, 368-369, Ser-387, Thr-405, and Arg-422; that span reads NY.

In the N-terminal section; belongs to the N-acetylglucosamine-1-phosphate uridyltransferase family. It in the C-terminal section; belongs to the transferase hexapeptide repeat family. As to quaternary structure, homotrimer. Requires Mg(2+) as cofactor.

It is found in the cytoplasm. It carries out the reaction alpha-D-glucosamine 1-phosphate + acetyl-CoA = N-acetyl-alpha-D-glucosamine 1-phosphate + CoA + H(+). It catalyses the reaction N-acetyl-alpha-D-glucosamine 1-phosphate + UTP + H(+) = UDP-N-acetyl-alpha-D-glucosamine + diphosphate. It participates in nucleotide-sugar biosynthesis; UDP-N-acetyl-alpha-D-glucosamine biosynthesis; N-acetyl-alpha-D-glucosamine 1-phosphate from alpha-D-glucosamine 6-phosphate (route II): step 2/2. The protein operates within nucleotide-sugar biosynthesis; UDP-N-acetyl-alpha-D-glucosamine biosynthesis; UDP-N-acetyl-alpha-D-glucosamine from N-acetyl-alpha-D-glucosamine 1-phosphate: step 1/1. It functions in the pathway bacterial outer membrane biogenesis; LPS lipid A biosynthesis. Functionally, catalyzes the last two sequential reactions in the de novo biosynthetic pathway for UDP-N-acetylglucosamine (UDP-GlcNAc). The C-terminal domain catalyzes the transfer of acetyl group from acetyl coenzyme A to glucosamine-1-phosphate (GlcN-1-P) to produce N-acetylglucosamine-1-phosphate (GlcNAc-1-P), which is converted into UDP-GlcNAc by the transfer of uridine 5-monophosphate (from uridine 5-triphosphate), a reaction catalyzed by the N-terminal domain. In Ruegeria pomeroyi (strain ATCC 700808 / DSM 15171 / DSS-3) (Silicibacter pomeroyi), this protein is Bifunctional protein GlmU.